The following is a 166-amino-acid chain: Probable chemoreceptor glutamine deamidase CheD (166 aa).

The protein belongs to the CheD family.

The catalysed reaction is L-glutaminyl-[protein] + H2O = L-glutamyl-[protein] + NH4(+). Its function is as follows. Probably deamidates glutamine residues to glutamate on methyl-accepting chemotaxis receptors (MCPs), playing an important role in chemotaxis. This is Probable chemoreceptor glutamine deamidase CheD from Clostridium acetobutylicum (strain ATCC 824 / DSM 792 / JCM 1419 / IAM 19013 / LMG 5710 / NBRC 13948 / NRRL B-527 / VKM B-1787 / 2291 / W).